Reading from the N-terminus, the 390-residue chain is Pyruvate dehydrogenase E1 component subunit alpha, somatic form, mitochondrial (390 aa).

Residues 1–29 (MRKMLAAVSRVLSGASQKPASRVLVASRN) constitute a mitochondrion transit peptide. An N6-acetyllysine; alternate modification is found at Lys63. N6-succinyllysine; alternate is present on Lys63. Pyruvate contacts are provided by His92, Tyr118, Arg119, Ala157, Gly165, Val167, Asp196, Gly197, Ala198, Asn225, and Tyr227. Thiamine diphosphate contacts are provided by Tyr118 and Arg119. Thiamine diphosphate contacts are provided by Gly165, Val167, Asp196, Gly197, Ala198, and Asn225. A Mg(2+)-binding site is contributed by Asp196. Mg(2+) contacts are provided by Asn225 and Tyr227. Ser232 is modified (phosphoserine; by PDK1). Residue Lys244 is modified to N6-acetyllysine; alternate. Lys244 is subject to N6-succinyllysine; alternate. Position 277 is an N6-succinyllysine (Lys277). His292 contributes to the thiamine diphosphate binding site. Ser293 carries the post-translational modification Phosphoserine; by PDK1, PDK2, PDK3 and PDK4. Phosphoserine is present on Ser295. Ser300 carries the phosphoserine; by PDK1, PDK2, PDK3 and PDK4 modification. Residue Tyr301 is modified to Phosphotyrosine. Residue Lys313 is modified to N6-acetyllysine; alternate. N6-succinyllysine; alternate is present on Lys313. N6-acetyllysine occurs at positions 321 and 336. Lys385 is modified (N6-succinyllysine).

As to quaternary structure, heterotetramer of two PDHA1 and two PDHB subunits. The heterotetramer interacts with DLAT, and is part of the multimeric pyruvate dehydrogenase complex that contains multiple copies of pyruvate dehydrogenase (E1), dihydrolipoamide acetyltransferase (DLAT, E2) and lipoamide dehydrogenase (DLD, E3). These subunits are bound to an inner core composed of about 48 DLAT and 12 PDHX molecules. The cofactor is thiamine diphosphate. Mg(2+) is required as a cofactor. Phosphorylation at Ser-232, Ser-293 and Ser-300 by PDK family kinases inactivates the enzyme; for this phosphorylation at a single site is sufficient. Phosphorylation at Ser-293 interferes with access to active site, and thereby inactivates the enzyme. Dephosphorylation at all three sites, i.e. at Ser-232, Ser-293 and Ser-300, is required for reactivation. In terms of processing, acetylation alters the phosphorylation pattern. Deacetylated by SIRT3.

The protein localises to the mitochondrion matrix. It carries out the reaction N(6)-[(R)-lipoyl]-L-lysyl-[protein] + pyruvate + H(+) = N(6)-[(R)-S(8)-acetyldihydrolipoyl]-L-lysyl-[protein] + CO2. With respect to regulation, pyruvate dehydrogenase activity is inhibited by phosphorylation of PDHA1; it is reactivated by dephosphorylation. Its function is as follows. The pyruvate dehydrogenase complex catalyzes the overall conversion of pyruvate to acetyl-CoA and CO(2), and thereby links the glycolytic pathway to the tricarboxylic cycle. This is Pyruvate dehydrogenase E1 component subunit alpha, somatic form, mitochondrial (PDHA1) from Macaca fascicularis (Crab-eating macaque).